Reading from the N-terminus, the 254-residue chain is NAD-dependent glycerol dehydrogenase (254 aa).

18 to 47 (VVTGAASGIGKAMAELFSEKGAYVVLLDIK) contributes to the NAD(+) binding site. Catalysis depends on tyrosine 160, which acts as the Proton acceptor. Lysine 164 provides a ligand contact to NAD(+).

This sequence belongs to the short-chain dehydrogenases/reductases (SDR) family. It depends on Mg(2+) as a cofactor. Requires Mn(2+) as cofactor.

The protein localises to the cytoplasm. It carries out the reaction glycerol + NAD(+) = dihydroxyacetone + NADH + H(+). Inhibited by Zn(2+). Its function is as follows. Involved in the glycerol metabolism. Catalyzes the NAD-dependent oxidation of glycerol to dihydroxyacetone (glycerone). GolD specifically uses NAD. This chain is NAD-dependent glycerol dehydrogenase, found in Listeria innocua serovar 6a (strain ATCC BAA-680 / CLIP 11262).